The following is a 152-amino-acid chain: Superoxide dismutase [Cu-Zn] 2 (152 aa).

Cu cation is bound by residues His45, His47, and His62. Cys56 and Cys145 are joined by a disulfide. Residues His62, His70, His79, and Asp82 each contribute to the Zn(2+) site. His119 contributes to the Cu cation binding site.

It belongs to the Cu-Zn superoxide dismutase family. As to quaternary structure, homodimer. Cu cation is required as a cofactor. The cofactor is Zn(2+).

The protein localises to the cytoplasm. The catalysed reaction is 2 superoxide + 2 H(+) = H2O2 + O2. Functionally, destroys radicals which are normally produced within the cells and which are toxic to biological systems. The polypeptide is Superoxide dismutase [Cu-Zn] 2 (SODCC.5) (Solanum lycopersicum (Tomato)).